We begin with the raw amino-acid sequence, 602 residues long: Glutamine--fructose-6-phosphate aminotransferase [isomerizing] (602 aa).

The active-site Nucleophile; for GATase activity is Cys2. The region spanning 2–217 (CGIVGVVGNT…DQELVIVKAD (216 aa)) is the Glutamine amidotransferase type-2 domain. Positions 67 to 87 (IGHTRWATHGKPTEDNAHPHR) are disordered. The span at 77–87 (KPTEDNAHPHR) shows a compositional bias: basic and acidic residues. 2 consecutive SIS domains span residues 283–422 (IIKA…ANGN) and 455–592 (VREL…VDKP). The active-site For Fru-6P isomerization activity is Lys597.

In terms of assembly, homodimer.

It is found in the cytoplasm. The catalysed reaction is D-fructose 6-phosphate + L-glutamine = D-glucosamine 6-phosphate + L-glutamate. Functionally, catalyzes the first step in hexosamine metabolism, converting fructose-6P into glucosamine-6P using glutamine as a nitrogen source. The chain is Glutamine--fructose-6-phosphate aminotransferase [isomerizing] from Streptococcus pneumoniae (strain ATCC BAA-255 / R6).